The following is a 292-amino-acid chain: Poly(U)-specific endoribonuclease-B (292 aa).

The region spanning 8-285 is the EndoU domain; that stretch reads VNHELSKLFN…IGTAYPALLS (278 aa). Catalysis depends on residues His162, His178, and Lys224.

It belongs to the ENDOU family. In terms of assembly, monomer. Requires Mn(2+) as cofactor.

The protein resides in the nucleus. It catalyses the reaction uridylyl-uridylyl-ribonucleotide-RNA = a 3'-end uridylyl-2',3'-cyclophospho-uridine-RNA + a 5'-end dephospho-ribonucleoside-RNA. Poly(U)-specific endoribonuclease involved in the processing of intron-encoded box C/D snoRNAs, such as U16 and U86. Releases products that have 2',3'-cyclic phosphate termini at the 3'-end. The polypeptide is Poly(U)-specific endoribonuclease-B (endou-b) (Xenopus laevis (African clawed frog)).